The chain runs to 163 residues: MINNVVLVGRMTKDAELRYTPSQVAVATFTLAVNRTFKSQNGEREADFINCVIWRQPAENLANWAKKGALIGITGRIQTRNYENQQGQRVYVTEVVADNFQMLESRATREGGSTGSFNGGFNNNTSSSNSYSAPAQQTPNFGRDDSPFGNSNPMDISDDDLPF.

One can recognise an SSB domain in the interval 1–104 (MINNVVLVGR…VVADNFQMLE (104 aa)). The disordered stretch occupies residues 109–163 (REGGSTGSFNGGFNNNTSSSNSYSAPAQQTPNFGRDDSPFGNSNPMDISDDDLPF). A compositionally biased stretch (low complexity) spans 119 to 130 (GGFNNNTSSSNS). Residues 131 to 140 (YSAPAQQTPN) are compositionally biased toward polar residues. The Important for interaction with partner proteins signature appears at 158–163 (DDDLPF).

Homotetramer.

Its function is as follows. Plays an important role in DNA replication, recombination and repair. Binds to ssDNA and to an array of partner proteins to recruit them to their sites of action during DNA metabolism. The protein is Single-stranded DNA-binding protein 2 (ssb2) of Streptococcus pyogenes serotype M18 (strain MGAS8232).